The primary structure comprises 288 residues: Probable anion import ATP-binding protein HVO_1886 (288 aa).

Positions 1 to 18 (MTTERPDAGDSGSEKPDE) are enriched in basic and acidic residues. The tract at residues 1-33 (MTTERPDAGDSGSEKPDETAAPDPAANGARRSK) is disordered. An ABC transporter domain is found at 36 to 282 (LAARSLGHGF…PDDDRVRQFV (247 aa)). An ATP-binding site is contributed by 68–75 (GPSGTGKT).

It belongs to the ABC transporter superfamily. In terms of assembly, the complex is composed of two ATP-binding proteins (HVO_1886), two transmembrane proteins (HVO_1887) and a solute-binding protein (HVO_1888).

It is found in the cell membrane. In terms of biological role, part of an ABC transporter complex involved in anions import. Responsible for energy coupling to the transport system. The chain is Probable anion import ATP-binding protein HVO_1886 from Haloferax volcanii (strain ATCC 29605 / DSM 3757 / JCM 8879 / NBRC 14742 / NCIMB 2012 / VKM B-1768 / DS2) (Halobacterium volcanii).